We begin with the raw amino-acid sequence, 493 residues long: MASGILVNVKEEVTCPICLELLTQPLSLDCGHSFCQACLTANHKKSMLDKGESSCPVCRISYQPENIRPNRHVANIVEKLREVKLSPEGQKVDHCARHGEKLLLFCQEDGKVICWLCERSQEHRGHHTFLTEEVAREYQVKLQAALEMLRQKQQEAEELEADIREEKASWKTQIQYDKTNVLADFEQLRDILDWEESNELQNLEKEEEDILKSLTKSETEMVQQTQSVRELISDLERRLQGSVMELLQGVDGVIKRMENVTLKKPETFPKNQRRVFRAPDLKGMLEVFRELTDVRRYWVDVTVAPNNISCAVISEDMRQVSSPKPQIIYGARGTRYQTFMNFNYCTGILGSQSITSGKHYWEVDVSKKSAWILGVCAGFQPDAMCNIEKNENYQPKYGYWVIGLEEGVKCSAFQDGSFHTPSAPFIVPLSVIICPDRVGVFLDYEACTVSFFNITNHGFLIYKFSHCSFSQPVFPYLNPRKCGVPMTLCSPSS.

At A2 the chain carries N-acetylalanine. Residues 15 to 59 (CPICLELLTQPLSLDCGHSFCQACLTANHKKSMLDKGESSCPVCR) form an RING-type zinc finger. S86 carries the phosphoserine modification. The B box-type zinc-finger motif lies at 90–132 (QKVDHCARHGEKLLLFCQEDGKVICWLCERSQEHRGHHTFLTE). Positions 95, 98, 117, and 123 each coordinate Zn(2+). A coiled-coil region spans residues 131-240 (TEEVAREYQV…LISDLERRLQ (110 aa)). The segment at 185 to 198 (FEQLRDILDWEESN) is required for interaction with GABARAP and for autophagy. The 213-residue stretch at 281–493 (LKGMLEVFRE…VPMTLCSPSS (213 aa)) folds into the B30.2/SPRY domain.

It belongs to the TRIM/RBCC family. In terms of assembly, can form homodimers and homotrimers. In addition to lower-order dimerization, also exhibits a higher-order multimerization and both low- and high-order multimerizations are essential for its restriction activity. Interacts with BTBD1 and BTBD2. Interacts with PSMC4, PSMC5, PSMD7 and HSPA8/HSC70. Interacts (via B30.2/SPRY domain) with HSPA1A/B. Interacts with PSMC2, MAP3K7/TAK1, TAB2 and TAB3. Interacts with SQSTM1. Interacts with TRIM6 and TRIM34. Interacts with ULK1 (phosphorylated form), GABARAP, GABARAPL1, GABARAPL2, MAP1LC3A, MAP1LC3C and BECN1. In terms of processing, degraded in a proteasome-independent fashion in the absence of viral infection but in a proteasome-dependent fashion following exposure to restriction sensitive virus. Post-translationally, autoubiquitinated in a RING finger- and UBE2D2-dependent manner. Monoubiquitinated by TRIM21. Deubiquitinated by Yersinia YopJ. Ubiquitination may not lead to proteasomal degradation.

The protein localises to the cytoplasm. It localises to the nucleus. It catalyses the reaction S-ubiquitinyl-[E2 ubiquitin-conjugating enzyme]-L-cysteine + [acceptor protein]-L-lysine = [E2 ubiquitin-conjugating enzyme]-L-cysteine + N(6)-ubiquitinyl-[acceptor protein]-L-lysine.. It functions in the pathway protein modification; protein ubiquitination. Capsid-specific restriction factor that prevents infection from non-host-adapted retroviruses. Blocks viral replication early in the life cycle, after viral entry but before reverse transcription. In addition to acting as a capsid-specific restriction factor, also acts as a pattern recognition receptor that activates innate immune signaling in response to the retroviral capsid lattice. Binding to the viral capsid triggers its E3 ubiquitin ligase activity, and in concert with the heterodimeric ubiquitin conjugating enzyme complex UBE2V1-UBE2N (also known as UBC13-UEV1A complex) generates 'Lys-63'-linked polyubiquitin chains, which in turn are catalysts in the autophosphorylation of the MAP3K7/TAK1 complex (includes TAK1, TAB2, and TAB3). Activation of the MAP3K7/TAK1 complex by autophosphorylation results in the induction and expression of NF-kappa-B and MAPK-responsive inflammatory genes, thereby leading to an innate immune response in the infected cell. Plays a role in regulating autophagy through activation of autophagy regulator BECN1 by causing its dissociation from its inhibitors BCL2 and TAB2. This chain is Tripartite motif-containing protein 5 (TRIM5), found in Pan paniscus (Pygmy chimpanzee).